A 200-amino-acid chain; its full sequence is Ubiquitin-conjugating enzyme E2 K (200 aa).

A2 carries the N-acetylalanine modification. One can recognise a UBC core domain in the interval 4-154 (IAVQRIKREF…ARLWAHVYAG (151 aa)). Residue K14 is modified to N6-acetyllysine; alternate. K14 participates in a covalent cross-link: Glycyl lysine isopeptide (Lys-Gly) (interchain with G-Cter in SUMO); alternate. K14 is covalently cross-linked (Glycyl lysine isopeptide (Lys-Gly) (interchain with G-Cter in SUMO1); alternate). C92 serves as the catalytic Glycyl thioester intermediate. Residue S159 is modified to Phosphoserine. The region spanning 160–200 (PEYTKKIENLCAMGFDRNAVIVALSSKSWDVETATELLLSN) is the UBA domain.

This sequence belongs to the ubiquitin-conjugating enzyme family. As to quaternary structure, interacts with RNF138/NARF. Interacts with BRCA1. In terms of processing, sumoylation at Lys-14 impairs catalytic activity.

The protein localises to the cytoplasm. It carries out the reaction S-ubiquitinyl-[E1 ubiquitin-activating enzyme]-L-cysteine + [E2 ubiquitin-conjugating enzyme]-L-cysteine = [E1 ubiquitin-activating enzyme]-L-cysteine + S-ubiquitinyl-[E2 ubiquitin-conjugating enzyme]-L-cysteine.. It functions in the pathway protein modification; protein ubiquitination. Functionally, accepts ubiquitin from the E1 complex and catalyzes its covalent attachment to other proteins. In vitro, in the presence or in the absence of BRCA1-BARD1 E3 ubiquitin-protein ligase complex, catalyzes the synthesis of 'Lys-48'-linked polyubiquitin chains. Does not transfer ubiquitin directly to but elongates monoubiquitinated substrate protein. Mediates the selective degradation of short-lived and abnormal proteins, such as the endoplasmic reticulum-associated degradation (ERAD) of misfolded lumenal proteins. Ubiquitinates huntingtin. May mediate foam cell formation by the suppression of apoptosis of lipid-bearing macrophages through ubiquitination and subsequence degradation of p53/TP53. Proposed to be involved in ubiquitination and proteolytic processing of NF-kappa-B; in vitro supports ubiquitination of NFKB1. This chain is Ubiquitin-conjugating enzyme E2 K (UBE2K), found in Bos taurus (Bovine).